Reading from the N-terminus, the 599-residue chain is Transcription factor COE4 (599 aa).

Residues arginine 64–asparagine 67 form an interaction with DNA region. Residues cysteine 152 to cysteine 171 form a C5-type zinc finger. 2 interaction with DNA regions span residues asparagine 198–asparagine 205 and asparagine 237–lysine 240. The IPT/TIG domain occupies proline 256–threonine 339. 2 disordered regions span residues glycine 449 to glycine 473 and valine 556 to phenylalanine 586. The span at serine 464–glycine 473 shows a compositional bias: low complexity.

The protein belongs to the COE family. In terms of assembly, forms either a homodimer or a heterodimer with a related family member. Expressed in the olfactory epithelium, including in both neuronal and basal cell layers. Absent in the vomeronasal organ. Absent from NK cells and CD8(+) T cells.

The protein resides in the nucleus. Its function is as follows. Transcription factor. Positively modulates transcription, perhaps less strongly than other early B cell factor/EBF family proteins. Binds an EBF1/Olf-1 consensus site in vitro. This is Transcription factor COE4 (Ebf4) from Mus musculus (Mouse).